The primary structure comprises 118 residues: Basic phospholipase A2 1 (118 aa).

7 cysteine pairs are disulfide-bonded: cysteine 11/cysteine 72, cysteine 26/cysteine 117, cysteine 28/cysteine 44, cysteine 43/cysteine 98, cysteine 50/cysteine 91, cysteine 60/cysteine 84, and cysteine 78/cysteine 89. 3 residues coordinate Ca(2+): tyrosine 27, glycine 29, and glycine 31. The active site involves histidine 47. Aspartate 48 contacts Ca(2+). The active site involves aspartate 92.

This sequence belongs to the phospholipase A2 family. Group I subfamily. D49 sub-subfamily. It depends on Ca(2+) as a cofactor. As to expression, expressed by the venom gland.

The protein localises to the secreted. The catalysed reaction is a 1,2-diacyl-sn-glycero-3-phosphocholine + H2O = a 1-acyl-sn-glycero-3-phosphocholine + a fatty acid + H(+). PLA2 catalyzes the calcium-dependent hydrolysis of the 2-acyl groups in 3-sn-phosphoglycerides. This Naja melanoleuca (Forest cobra) protein is Basic phospholipase A2 1.